We begin with the raw amino-acid sequence, 200 residues long: Probable GTP-binding protein EngB (200 aa).

Positions 24–199 constitute an EngB-type G domain; that stretch reads EGAEVAFAGR…RGVIGGWLGL (176 aa). GTP contacts are provided by residues 32–39, 59–63, 77–80, 144–147, and 178–180; these read GRSNAGKS, GRTQQ, DLPG, TKAD, and FSG. Positions 39 and 61 each coordinate Mg(2+).

The protein belongs to the TRAFAC class TrmE-Era-EngA-EngB-Septin-like GTPase superfamily. EngB GTPase family. Mg(2+) is required as a cofactor.

Its function is as follows. Necessary for normal cell division and for the maintenance of normal septation. This Stenotrophomonas maltophilia (strain K279a) protein is Probable GTP-binding protein EngB.